The sequence spans 341 residues: MGLTYKDSGVDKEKGYEEVQIIKEIVKKTHGKEVLTGIGGFAGLFKPELTDMKEPVLVSGTDGVGTKIKLAMELDKHDTVGIDLVAMCVNDVLCQGAKPLFFLDYIATGSLKPAKMADLVRGVAEGCSQSECALIGGETAEMPGLYKENDYDLAGFAVGIVDRDKIIDGSGIKEGDVAISLSSSGVHSNGFSLVRAALDMANVKLSDKFEDTTVGERLLVPTRIYEKEISALLKEVEIKGIAHITGGGLYENVPRMLPENIGIEFDIKESEIDSVFKAIQKWGNVETKEMFSTFNMGIGMVVVVDAKDVDKSLEILQKIDPKAKQCGVCKKTETSVKINLK.

This sequence belongs to the AIR synthase family.

The protein resides in the cytoplasm. The catalysed reaction is 2-formamido-N(1)-(5-O-phospho-beta-D-ribosyl)acetamidine + ATP = 5-amino-1-(5-phospho-beta-D-ribosyl)imidazole + ADP + phosphate + H(+). Its pathway is purine metabolism; IMP biosynthesis via de novo pathway; 5-amino-1-(5-phospho-D-ribosyl)imidazole from N(2)-formyl-N(1)-(5-phospho-D-ribosyl)glycinamide: step 2/2. This Finegoldia magna (strain ATCC 29328 / DSM 20472 / WAL 2508) (Peptostreptococcus magnus) protein is Phosphoribosylformylglycinamidine cyclo-ligase.